A 194-amino-acid polypeptide reads, in one-letter code: Ribosomal RNA small subunit methyltransferase G (194 aa).

S-adenosyl-L-methionine contacts are provided by residues Gly-70, Tyr-75, 121 to 122 (VE), and Arg-135.

The protein belongs to the methyltransferase superfamily. RNA methyltransferase RsmG family.

The protein resides in the cytoplasm. The enzyme catalyses guanosine(527) in 16S rRNA + S-adenosyl-L-methionine = N(7)-methylguanosine(527) in 16S rRNA + S-adenosyl-L-homocysteine. Its function is as follows. Specifically methylates the N7 position of guanine in position 527 of 16S rRNA. This chain is Ribosomal RNA small subunit methyltransferase G, found in Aliarcobacter butzleri (strain RM4018) (Arcobacter butzleri).